The following is a 311-amino-acid chain: Ribosomal protein L11 methyltransferase (311 aa).

Residues Thr-160, Gly-181, Asp-203, and Asn-246 each contribute to the S-adenosyl-L-methionine site.

Belongs to the methyltransferase superfamily. PrmA family.

It is found in the cytoplasm. It catalyses the reaction L-lysyl-[protein] + 3 S-adenosyl-L-methionine = N(6),N(6),N(6)-trimethyl-L-lysyl-[protein] + 3 S-adenosyl-L-homocysteine + 3 H(+). Methylates ribosomal protein L11. The chain is Ribosomal protein L11 methyltransferase from Macrococcus caseolyticus (strain JCSC5402) (Macrococcoides caseolyticum).